Here is a 138-residue protein sequence, read N- to C-terminus: Small ribosomal subunit protein uS11c (138 aa).

The tract at residues 1-22 is disordered; it reads MAKPIPKIGSRKNARSGSRKHL. Positions 9-22 are enriched in basic residues; that stretch reads GSRKNARSGSRKHL.

Belongs to the universal ribosomal protein uS11 family. As to quaternary structure, part of the 30S ribosomal subunit.

Its subcellular location is the plastid. It is found in the chloroplast. This Lotus japonicus (Lotus corniculatus var. japonicus) protein is Small ribosomal subunit protein uS11c.